A 550-amino-acid polypeptide reads, in one-letter code: Hydroxylamine reductase (550 aa).

Cysteine 3, cysteine 6, cysteine 18, and cysteine 25 together coordinate [2Fe-2S] cluster. Hybrid [4Fe-2O-2S] cluster contacts are provided by histidine 249, glutamate 273, cysteine 317, cysteine 405, cysteine 433, cysteine 458, glutamate 492, and lysine 494. Cysteine 405 carries the post-translational modification Cysteine persulfide.

Belongs to the HCP family. [2Fe-2S] cluster serves as cofactor. Requires hybrid [4Fe-2O-2S] cluster as cofactor.

The protein localises to the cytoplasm. It catalyses the reaction A + NH4(+) + H2O = hydroxylamine + AH2 + H(+). Functionally, catalyzes the reduction of hydroxylamine to form NH(3) and H(2)O. This is Hydroxylamine reductase from Salmonella choleraesuis (strain SC-B67).